We begin with the raw amino-acid sequence, 405 residues long: Multidrug resistance protein MdtH (405 aa).

The next 12 helical transmembrane spans lie at 13-33 (YFLL…FPLI), 34-54 (SIRF…ALGL), 78-95 (MIIA…LMGI), 99-116 (PWLL…GTLF), 139-159 (LLMM…SWLL), 165-185 (LVCL…AWLL), 213-233 (YVLT…MLPI), 243-263 (AAVK…LYPI), 277-297 (LMAG…IEDL), 299-319 (ALFM…PARE), 340-360 (LGLA…YDVG), and 365-385 (IPQL…LGLY).

It belongs to the major facilitator superfamily. DHA1 family. MdtH (TC 2.A.1.2.21) subfamily.

Its subcellular location is the cell inner membrane. This is Multidrug resistance protein MdtH from Sodalis glossinidius (strain morsitans).